We begin with the raw amino-acid sequence, 518 residues long: Lycopene epsilon cyclase, chloroplastic (518 aa).

Residue 100-128 (LIVIGCGPAGMSLAAEAGKRGLSVGLIGP) participates in NAD(+) binding. 2 consecutive transmembrane segments (helical) span residues 435-455 (FFLF…RIFF) and 469-489 (FLGS…MFAI).

This sequence belongs to the lycopene cyclase family. As to expression, expressed in leaves and roots. Detected in flower buds and lips.

Its subcellular location is the plastid. The protein localises to the chloroplast membrane. The catalysed reaction is a carotenoid psi-end group = a carotenoid epsilon-end group. Its pathway is carotenoid biosynthesis; alpha-zeacarotene biosynthesis. It participates in carotenoid biosynthesis; delta-carotene biosynthesis. Functionally, catalyzes the single epsilon-cyclization reaction which converts lycopene to delta-carotene and neurosporene to alpha-zeacarotene. Required for lutein biosynthesis. The polypeptide is Lycopene epsilon cyclase, chloroplastic (Oncidium hybrid cultivar (Orchid)).